Here is a 552-residue protein sequence, read N- to C-terminus: Cholesterol oxidase (552 aa).

The tat-type signal signal peptide spans 1–45 (MTDSRANRADATRGVASVSRRRFLAGAGLTAGAIALSSMSTSASA). FAD contacts are provided by Y66, G67, E86, G160, N164, G165, M167, and V295. Active-site proton acceptor residues include E406 and H492. Residues G520 and F532 each coordinate FAD.

The protein belongs to the GMC oxidoreductase family. It depends on FAD as a cofactor. In terms of processing, predicted to be exported by the Tat system. The position of the signal peptide cleavage has been experimentally proven.

The protein localises to the secreted. The catalysed reaction is cholesterol + O2 = cholest-5-en-3-one + H2O2. The enzyme catalyses cholest-5-en-3-one = cholest-4-en-3-one. It participates in steroid metabolism; cholesterol degradation. Bifunctional enzyme that catalyzes the oxidation and isomerization of cholesterol to cholestenone (cholest-4-en-3-one), an initial step in the cholesterol degradation process. In Brevibacterium sterolicum, this protein is Cholesterol oxidase.